Consider the following 651-residue polypeptide: Ion-translocating oxidoreductase complex subunit C (651 aa).

4Fe-4S ferredoxin-type domains lie at 368–398 (EYAE…QQLY) and 408–437 (KSEE…IQYF). Positions 378, 381, 384, 388, 417, 420, 423, and 427 each coordinate [4Fe-4S] cluster. 2 stretches are compositionally biased toward basic and acidic residues: residues 465–477 (QARM…ERKA) and 485–513 (ARRE…KANE). Disordered stretches follow at residues 465–565 (QARM…QPTD) and 583–624 (LAQA…DPKK). Polar residues-rich tracts occupy residues 554–564 (VENQEQQTQPT) and 587–600 (NSTS…QTAE). Residues 602 to 614 (EVEKTKSAVEKTQ) show a composition bias toward basic and acidic residues.

Belongs to the 4Fe4S bacterial-type ferredoxin family. RnfC subfamily. As to quaternary structure, the complex is composed of six subunits: RnfA, RnfB, RnfC, RnfD, RnfE and RnfG. It depends on [4Fe-4S] cluster as a cofactor.

It is found in the cell inner membrane. Functionally, part of a membrane-bound complex that couples electron transfer with translocation of ions across the membrane. This chain is Ion-translocating oxidoreductase complex subunit C, found in Haemophilus influenzae (strain PittEE).